Reading from the N-terminus, the 487-residue chain is NADH-quinone oxidoreductase subunit N (487 aa).

The next 13 membrane-spanning stretches (helical) occupy residues 7-27 (ILGP…LLMV), 38-58 (LVGL…GLGA), 79-99 (YAKA…MVWL), 111-131 (ILVL…DLIA), 164-184 (FVLG…VYGF), 207-227 (LLIG…AVPF), 238-258 (APTP…LTLF), 276-296 (VIIL…IVQT), 301-321 (LMAY…AAGT), 328-348 (VLVY…VILA), 373-393 (AAAM…AGFF), 406-426 (GLFA…FYYL), and 451-471 (VILI…SVVV).

Belongs to the complex I subunit 2 family. In terms of assembly, NDH-1 is composed of 14 different subunits. Subunits NuoA, H, J, K, L, M, N constitute the membrane sector of the complex.

The protein localises to the cell inner membrane. It carries out the reaction a quinone + NADH + 5 H(+)(in) = a quinol + NAD(+) + 4 H(+)(out). Its function is as follows. NDH-1 shuttles electrons from NADH, via FMN and iron-sulfur (Fe-S) centers, to quinones in the respiratory chain. The immediate electron acceptor for the enzyme in this species is believed to be ubiquinone. Couples the redox reaction to proton translocation (for every two electrons transferred, four hydrogen ions are translocated across the cytoplasmic membrane), and thus conserves the redox energy in a proton gradient. The polypeptide is NADH-quinone oxidoreductase subunit N (Rhodospirillum rubrum (strain ATCC 11170 / ATH 1.1.1 / DSM 467 / LMG 4362 / NCIMB 8255 / S1)).